The following is a 270-amino-acid chain: Formamidopyrimidine-DNA glycosylase (270 aa).

Proline 2 functions as the Schiff-base intermediate with DNA in the catalytic mechanism. The Proton donor role is filled by glutamate 3. Lysine 58 (proton donor; for beta-elimination activity) is an active-site residue. Residues histidine 91, arginine 110, and arginine 151 each coordinate DNA. The FPG-type zinc-finger motif lies at 236–270 (LVYGRDGLPCPNCGRALKHATIGQRASVWCSHCQR). The active-site Proton donor; for delta-elimination activity is arginine 260.

It belongs to the FPG family. Monomer. Zn(2+) is required as a cofactor.

It catalyses the reaction Hydrolysis of DNA containing ring-opened 7-methylguanine residues, releasing 2,6-diamino-4-hydroxy-5-(N-methyl)formamidopyrimidine.. The catalysed reaction is 2'-deoxyribonucleotide-(2'-deoxyribose 5'-phosphate)-2'-deoxyribonucleotide-DNA = a 3'-end 2'-deoxyribonucleotide-(2,3-dehydro-2,3-deoxyribose 5'-phosphate)-DNA + a 5'-end 5'-phospho-2'-deoxyribonucleoside-DNA + H(+). Involved in base excision repair of DNA damaged by oxidation or by mutagenic agents. Acts as a DNA glycosylase that recognizes and removes damaged bases. Has a preference for oxidized purines, such as 7,8-dihydro-8-oxoguanine (8-oxoG). Has AP (apurinic/apyrimidinic) lyase activity and introduces nicks in the DNA strand. Cleaves the DNA backbone by beta-delta elimination to generate a single-strand break at the site of the removed base with both 3'- and 5'-phosphates. This Stenotrophomonas maltophilia (strain R551-3) protein is Formamidopyrimidine-DNA glycosylase.